Here is a 422-residue protein sequence, read N- to C-terminus: Glucose-1-phosphate adenylyltransferase (422 aa).

Alpha-D-glucose 1-phosphate contacts are provided by residues tyrosine 110, glycine 175, 190-191 (EK), and serine 208.

It belongs to the bacterial/plant glucose-1-phosphate adenylyltransferase family. As to quaternary structure, homotetramer.

The enzyme catalyses alpha-D-glucose 1-phosphate + ATP + H(+) = ADP-alpha-D-glucose + diphosphate. Its pathway is glycan biosynthesis; glycogen biosynthesis. Its function is as follows. Involved in the biosynthesis of ADP-glucose, a building block required for the elongation reactions to produce glycogen. Catalyzes the reaction between ATP and alpha-D-glucose 1-phosphate (G1P) to produce pyrophosphate and ADP-Glc. This chain is Glucose-1-phosphate adenylyltransferase, found in Hydrogenovibrio crunogenus (strain DSM 25203 / XCL-2) (Thiomicrospira crunogena).